The sequence spans 473 residues: Lactate utilization protein B (473 aa).

2 consecutive 4Fe-4S ferredoxin-type domains span residues 302-332 (GSEF…GHSY) and 351-380 (YDDY…LHDL). [4Fe-4S] cluster-binding residues include Cys311, Cys314, Cys317, Cys321, Cys364, Cys367, and Cys371.

It belongs to the LutB/YkgF family.

Is involved in L-lactate degradation and allows cells to grow with lactate as the sole carbon source. Has probably a role as an electron transporter during oxidation of L-lactate. This is Lactate utilization protein B from Bacillus cereus (strain G9842).